The primary structure comprises 186 residues: UPF0200 protein PF1294 (186 aa).

7–14 serves as a coordination point for ATP; sequence GMPGSGKG.

The protein belongs to the UPF0200 family.

In Pyrococcus furiosus (strain ATCC 43587 / DSM 3638 / JCM 8422 / Vc1), this protein is UPF0200 protein PF1294.